We begin with the raw amino-acid sequence, 583 residues long: Cationic amino acid transporter 6, chloroplastic (583 aa).

Residues 1 to 50 (MEVQSSSNNGGHSSFSSLRVYLNSLSATPSRLSRRAISVSTSSDEMSRVR) constitute a chloroplast transit peptide. The next 14 membrane-spanning stretches (helical) occupy residues 63–83 (WYDLIGLGIGGMVGAGVFVTT), 91–111 (AGPSIVVSYAIAGLCALLSAF), 132–152 (ITFGEFPAFFTGANLVMDYVM), 186–206 (GFNEIDPVAVLVVLVITVIIC), 216–236 (NMIMTAFHIAFIFFVIVMGFI), 255–275 (FFPFGAAGVFNGAAMVYLSYI), 294–314 (IPVGVSGSVAIVTVLYCLMAV), 347–367 (VVGIGASFGILTSLLVAMLGQ), 397–417 (ASTFLGIFTAALALFTDLNVL), 418–438 (LNLVSIGTLFVFYMVANALIF), 450–470 (WPTLCFLTLFSITSLVFTLIW), 481–501 (FMLGASAVVAIAIVLSFQCVV), 509–529 (LWGVPFMPWTPCVSIFLNIFL), and 541–561 (FGFFSGLIVLVYLFYGVHASS).

Belongs to the amino acid-polyamine-organocation (APC) superfamily. Cationic amino acid transporter (CAT) (TC 2.A.3.3) family. In terms of tissue distribution, expressed in roots, stems, flowers, and leaves.

Its subcellular location is the plastid. It localises to the chloroplast membrane. Permease involved in the transport of the cationic neutral or acidic amino acids. The protein is Cationic amino acid transporter 6, chloroplastic (CAT6) of Arabidopsis thaliana (Mouse-ear cress).